Reading from the N-terminus, the 696-residue chain is L-amino-acid oxidase (696 aa).

A propeptide spanning residues 1–130 (MKWSAAAGAA…IKMRRDLKAR (130 aa)) is cleaved from the precursor. Residues E207, R215, 236 to 237 (MR), and V440 each bind FAD. Substrate is bound at residue R237. Y564 contributes to the substrate binding site. Residues E649 and 658 to 661 (IASA) contribute to the FAD site.

It belongs to the flavin monoamine oxidase family. The cofactor is FAD.

It carries out the reaction an L-alpha-amino acid + O2 + H2O = a 2-oxocarboxylate + H2O2 + NH4(+). The protein is L-amino-acid oxidase (lox) of Neurospora crassa (strain ATCC 24698 / 74-OR23-1A / CBS 708.71 / DSM 1257 / FGSC 987).